The primary structure comprises 197 residues: Transcription factor FapR (197 aa).

It belongs to the FapR family.

Its function is as follows. Transcriptional factor involved in regulation of membrane lipid biosynthesis by repressing genes involved in fatty acid and phospholipid metabolism. The protein is Transcription factor FapR of Bacillus mycoides (strain KBAB4) (Bacillus weihenstephanensis).